The chain runs to 780 residues: Cullin-5 (780 aa).

Phosphoserine is present on S34. Residue T210 is modified to Phosphothreonine. The region spanning 711–772 is the Cullin neddylation domain; the sequence is RILRTQEAII…HKYIRRDEAD (62 aa). K724 participates in a covalent cross-link: Glycyl lysine isopeptide (Lys-Gly) (interchain with G-Cter in NEDD8).

The protein belongs to the cullin family. In terms of assembly, component of multiple cullin-5-RING E3 ubiquitin-protein ligase complexes (ECS complexes, also named CRL5 complexes) formed of CUL5, Elongin BC (ELOB and ELOC), RNF7/RBX2 and a variable SOCS box domain-containing protein as substrate-specific recognition component. CUL5-containing ECS complexes specifically contain RNF7/RBX2, and not RBX1, as catalytic subunit. Component of the ECS(ASB2) complex with the substrate recognition component ASB2. Component of the ECS(ASB6) complex with the substrate recognition component ASB6. Component of the ECS(ASB7) complex with the substrate recognition component ASB7. Component of the ECS(ASB9) complex with the substrate recognition component ASB9. Component of the ECS(ASB11) complex with the substrate recognition component ASB11. Component of the ECS(ASB12) complex with the substrate recognition component ASB12. Component of the ECS(LRRC41) complex with the substrate recognition component LRRC41. Component of the ECS(SOCS1) complex with the substrate recognition component SOCS1. Component of the ECS(SOCS2) complex with the substrate recognition component SOCS2. Component of the ECS(WSB1) complex with the substrate recognition subunit WSB1. Component of the ECS(SOCS3) complex with the substrate recognition component SOCS3. Component of the ECS(SOCS7) complex with the substrate recognition component SOCS7. Component of the ECS(SPSB1) complex with the substrate recognition component SPSB1. Component of the ECS(SPSB3) complex with the substrate recognition component SPSB3. Component of the ECS(SPSB2) complex with the substrate recognition component SPSB2. Component of the ECS(SPSB4) complex with the substrate recognition component SPSB4. Component of the ECS(RAB40) complex with the substrate recognition subunit RAB40A, RAB40B or RAB40C. Component of the ECS(KLHDC1) complex with the substrate recognition component KLHDC1. Component of the ECS(PCMTD1) complex with the substrate recognition subunit PCMTD1. May also form complexes containing RBX1 and ELOA or VHL; additional evidence is however required to confirm this result in vivo. Interacts (when neddylated) with ARIH2; leading to activate the E3 ligase activity of ARIH2. Interacts with ERCC6; the interaction is induced by DNA damaging agents or inhibitors of RNA polymerase II elongation. Interacts with ELOA (via the BC-box). Interacts (unneddylated form) with DCUN1D1, DCUN1D2, DCUN1D3, DCUN1D4 and DCUN1D5; these interactions promote the cullin neddylation. Post-translationally, neddylated; which enhances the ubiquitination activity of ECS complexes and prevents binding of the inhibitor CAND1. Deneddylated via its interaction with the COP9 signalosome (CSN).

Its subcellular location is the nucleus. Its pathway is protein modification; protein ubiquitination. Functionally, core component of multiple cullin-5-RING E3 ubiquitin-protein ligase complexes (ECS complexes, also named CRL5 complexes), which mediate the ubiquitination and subsequent proteasomal degradation of target proteins. Acts a scaffold protein that contributes to catalysis through positioning of the substrate and the ubiquitin-conjugating enzyme. The functional specificity of the E3 ubiquitin-protein ligase complex depends on the variable SOCS box-containing substrate recognition component. Acts as a key regulator of neuron positioning during cortex development: component of various SOCS-containing ECS complexes, such as the ECS(SOCS7) complex, that regulate reelin signaling by mediating ubiquitination and degradation of DAB1. ECS(SOCS1) seems to direct ubiquitination of JAK2. The ECS(SOCS2) complex mediates the ubiquitination and subsequent proteasomal degradation of phosphorylated EPOR and GHR. The ECS(SPSB3) complex catalyzes ubiquitination of nuclear CGAS. ECS(KLHDC1) complex is part of the DesCEND (destruction via C-end degrons) pathway and mediates ubiquitination and degradation of truncated SELENOS selenoprotein produced by failed UGA/Sec decoding, which ends with a glycine. The ECS(ASB9) complex mediates ubiquitination and degradation of CKB. As part of some ECS complex, promotes 'Lys-11'-linked ubiquitination and degradation of BTRC. As part of a multisubunit ECS complex, polyubiquitinates monoubiquitinated POLR2A. As part of the ECS(RAB40C) complex, mediates ANKRD28 ubiquitination and degradation, thereby regulating protein phosphatase 6 (PP6) complex activity and focal adhesion assembly during cell migration. As part of the ECS(RAB40A) complex, mediates RHOU 'Lys-48'-linked ubiquitination and degradation, thus inhibiting focal adhesion disassembly during cell migration. As part of the ECS(RAB40B) complex, mediates LIMA1/EPLIN and RAP2 ubiquitination, thereby regulating actin cytoskeleton dynamics and stress fiber formation during cell migration. May form a cell surface vasopressin receptor. In Rattus norvegicus (Rat), this protein is Cullin-5.